The primary structure comprises 96 residues: Putative pterin-4-alpha-carbinolamine dehydratase (96 aa).

The protein belongs to the pterin-4-alpha-carbinolamine dehydratase family.

The catalysed reaction is (4aS,6R)-4a-hydroxy-L-erythro-5,6,7,8-tetrahydrobiopterin = (6R)-L-erythro-6,7-dihydrobiopterin + H2O. The protein is Putative pterin-4-alpha-carbinolamine dehydratase of Paraburkholderia phytofirmans (strain DSM 17436 / LMG 22146 / PsJN) (Burkholderia phytofirmans).